A 1340-amino-acid polypeptide reads, in one-letter code: Serine/threonine-protein phosphatase 7 long form homolog (1340 aa).

Asp660 and His662 together coordinate Mn(2+). His722 acts as the Proton donor in catalysis. Position 773 (His773) interacts with Mn(2+). Disordered stretches follow at residues 788-814, 1012-1093, 1196-1218, and 1266-1340; these read QERN…DRSE, KSMD…SRTR, TDGA…SEDI, and FTNL…DMDS. A compositionally biased stretch (basic residues) spans 790-799; that stretch reads RNRKRKRTQK. Over residues 1018 to 1027 the composition is skewed to acidic residues; the sequence is EQMEVDEKDD. A compositionally biased stretch (basic and acidic residues) spans 1049–1080; sequence GDRDMVDFSDKTENGSKEADHSETAEISKDLS. Positions 1203-1213 are enriched in polar residues; that stretch reads EPSTSKLNYSE. Basic and acidic residues-rich tracts occupy residues 1266-1289 and 1318-1328; these read FTNL…ERVI and DSVDSKNKGSL.

It belongs to the PPP phosphatase family. PP-7 subfamily. Requires Mn(2+) as cofactor. In terms of tissue distribution, expressed in root tips, the shoot apical meristem (SAM), leaf vasculature, hydathodes and mature flowers.

The protein resides in the nucleus. It carries out the reaction O-phospho-L-seryl-[protein] + H2O = L-seryl-[protein] + phosphate. The enzyme catalyses O-phospho-L-threonyl-[protein] + H2O = L-threonyl-[protein] + phosphate. Its function is as follows. Maybe required to maintain cell division activity in meristematic cells. This is Serine/threonine-protein phosphatase 7 long form homolog from Arabidopsis thaliana (Mouse-ear cress).